Here is a 366-residue protein sequence, read N- to C-terminus: Isocitrate dehydrogenase [NAD] subunit alpha, mitochondrial (366 aa).

The transit peptide at 1–27 directs the protein to the mitochondrion; the sequence is MAGPAWISKVSRLLGAFHNPKQVTRGF. Position 77 is an N6-succinyllysine (Lys77). The residue at position 101 (Thr101) is a Phosphothreonine. The substrate site is built by Arg115, Arg125, and Arg146. Lys223 carries the N6-acetyllysine modification. Residues Asp233, Asp257, and Asp261 each contribute to the Mg(2+) site. Lys343 bears the N6-acetyllysine; alternate mark. Lys343 is subject to N6-succinyllysine; alternate. Lys350 carries the N6-succinyllysine modification.

Belongs to the isocitrate and isopropylmalate dehydrogenases family. Heterooligomer of subunits alpha (IDH3A), beta (IDH3B), and gamma (IDH3G) in the apparent ratio of 2:1:1. The heterodimer containing one IDH3A and one IDH3B subunit and the heterodimer containing one IDH3A and one IDH3G subunit assemble into a heterotetramer (which contains two subunits of IDH3A, one of IDH3B and one of IDH3G) and further into the heterooctamer. Mg(2+) serves as cofactor. It depends on Mn(2+) as a cofactor.

It is found in the mitochondrion. The enzyme catalyses D-threo-isocitrate + NAD(+) = 2-oxoglutarate + CO2 + NADH. Its activity is regulated as follows. The heterotetramer and the heterodimer composed of IDH3A and IDH3G subunits can be allosterically activated by citrate (CIT) or/and ADP, and the two activators can act independently or synergistically. The heterodimer composed of IDH3A and IDH3B subunits cannot be allosterically regulated and the allosteric regulation of the heterotetramer is through the IDH3G subunit and not the IDH3B subunit. The IDH3G subunit contains the allosteric site which consists of a CIT-binding site and an ADP-binding site, and the binding of CIT and ADP causes conformational changes at the allosteric site which are transmitted to the active site in the catalytic subunit (IDH3A) through a cascade of conformational changes at the heterodimer interface, leading to stabilization of the isocitrate-binding at the active site and thus activation of the enzyme. ATP can activate the heterotetramer and the heterodimer composed of IDH3A and IDH3G subunits at low concentrations but inhibits their activities at high concentrations, whereas ATP exhibits only inhibitory effect on the heterodimer composed of IDH3A and IDH3B subunits. Functionally, catalytic subunit of the enzyme which catalyzes the decarboxylation of isocitrate (ICT) into alpha-ketoglutarate. The heterodimer composed of the alpha (IDH3A) and beta (IDH3B) subunits and the heterodimer composed of the alpha (IDH3A) and gamma (IDH3G) subunits, have considerable basal activity but the full activity of the heterotetramer (containing two subunits of IDH3A, one of IDH3B and one of IDH3G) requires the assembly and cooperative function of both heterodimers. The chain is Isocitrate dehydrogenase [NAD] subunit alpha, mitochondrial from Pongo abelii (Sumatran orangutan).